Reading from the N-terminus, the 129-residue chain is Small ribosomal subunit protein uS11 (129 aa).

The protein belongs to the universal ribosomal protein uS11 family. Part of the 30S ribosomal subunit. Interacts with proteins S7 and S18. Binds to IF-3.

Functionally, located on the platform of the 30S subunit, it bridges several disparate RNA helices of the 16S rRNA. Forms part of the Shine-Dalgarno cleft in the 70S ribosome. The polypeptide is Small ribosomal subunit protein uS11 (Rhizobium etli (strain CIAT 652)).